A 316-amino-acid polypeptide reads, in one-letter code: Ribosomal RNA small subunit methyltransferase H (316 aa).

S-adenosyl-L-methionine is bound by residues 35-37 (AGH), Asp-55, Phe-84, Asp-105, and Gln-112.

The protein belongs to the methyltransferase superfamily. RsmH family.

It localises to the cytoplasm. It carries out the reaction cytidine(1402) in 16S rRNA + S-adenosyl-L-methionine = N(4)-methylcytidine(1402) in 16S rRNA + S-adenosyl-L-homocysteine + H(+). Functionally, specifically methylates the N4 position of cytidine in position 1402 (C1402) of 16S rRNA. This is Ribosomal RNA small subunit methyltransferase H from Streptococcus pneumoniae (strain ATCC 700669 / Spain 23F-1).